A 484-amino-acid chain; its full sequence is MKGRRRRRREYCKFTLLLALYTLLLLLVPSVLDSHSEQDKGRNCPGLQRSLGVWSLEAAAAGEREQGAEVRSLAEGNPDRSPGSPGNLSAVGEAVTQEKQHIYVHATWRTGSSFLGELFNQHPDVFYLYEPMWHLWQALYPGDAESLQGALRDMLRSLFRCDFSVLRLYAQPGDPGERAPDSANLTTAMLFRWRTNKVICSPPLCPAAPRARADVGLVEDKACESTCPPVSLRALEAECRKYPVVVIKDVRLLDLGVLVPLLRDPGLNLKVVQLFRDPRAVHNSRLKSRQGLLRESIQVLRTRQRGDHFHRVLLAHGVDARPGGQARALPSAPRADFFLTSALEVICEAWLRDLLFTRGAPAWLRRRYLRLRYEDLVWQPQAQLRRLLRFSGLRTLAALDAFAFNMTRGSAYGADRPFHLSARDAREAVHAWRERLSQEQVRQVETACAPAMRLLAYPRSGDERDRKTVREGETPLETKANWAV.

Topologically, residues 1–12 (MKGRRRRRREYC) are cytoplasmic. Residues 13-33 (KFTLLLALYTLLLLLVPSVLD) traverse the membrane as a helical; Signal-anchor for type II membrane protein segment. At 34 to 484 (SHSEQDKGRN…PLETKANWAV (451 aa)) the chain is on the lumenal side. A disordered region spans residues 71 to 90 (RSLAEGNPDRSPGSPGNLSA). The N-linked (GlcNAc...) asparagine glycan is linked to Asn-87. 108-114 (WRTGSSF) provides a ligand contact to 3'-phosphoadenylyl sulfate. Residue Asn-184 is glycosylated (N-linked (GlcNAc...) asparagine). 276-284 (RDPRAVHNS) serves as a coordination point for 3'-phosphoadenylyl sulfate. A glycan (N-linked (GlcNAc...) asparagine) is linked at Asn-405. A Phosphoserine modification is found at Ser-460. Residues 460–473 (SGDERDRKTVREGE) are compositionally biased toward basic and acidic residues. The tract at residues 460–484 (SGDERDRKTVREGETPLETKANWAV) is disordered.

Belongs to the sulfotransferase 1 family. Gal/GlcNAc/GalNAc subfamily. As to expression, widely expressed. Highly expressed in kidney. Expressed at lower level in heart, lung and liver.

The protein localises to the golgi apparatus membrane. The catalysed reaction is chondroitin beta-D-glucuronate + n 3'-phosphoadenylyl sulfate = chondroitin 6'-sulfate + n adenosine 3',5'-bisphosphate + n H(+). Functionally, sulfotransferase that utilizes 3'-phospho-5'-adenylyl sulfate (PAPS) as sulfonate donor to catalyze the transfer of sulfate to position 6 of non-reducing N-acetylglucosamine (GlcNAc) residues. Preferentially acts on mannose-linked GlcNAc. Also able to catalyze the transfer of sulfate to position 6 of the N-acetylgalactosamine (GalNAc) residue of chondroitin. Also acts on core 2 mucin-type oligosaccharide and N-acetyllactosamine oligomer with a lower efficiency. Has weak or no activity toward keratan sulfate and oligosaccharides containing the Galbeta1-4GlcNAc. Catalyzes 6-O-sulfation of beta-benzyl GlcNAc but not alpha- or beta-benzyl GalNAc. This chain is Carbohydrate sulfotransferase 7 (Chst7), found in Mus musculus (Mouse).